We begin with the raw amino-acid sequence, 699 residues long: SHC SH2 domain-binding protein 1 homolog A (699 aa).

3 PbH1 repeats span residues 480 to 502, 503 to 524, and 532 to 554; these read SAEL…EIYP, GSKC…LIKD, and IPKI…VLVK. Residues 603-627 are a coiled coil; sequence AVEHTNNLEKDQGNLAIAKEEVECE.

It localises to the midbody. It is found in the cytoplasm. The protein resides in the cytoskeleton. The protein localises to the spindle. May play a role in signaling pathways governing cellular proliferation. This Xenopus laevis (African clawed frog) protein is SHC SH2 domain-binding protein 1 homolog A (shcbp1-a).